A 232-amino-acid chain; its full sequence is E3 ubiquitin-protein ligase RNF125 (232 aa).

The span at 1-10 shows a compositional bias: polar residues; it reads MGSVLSTDSG. Residues 1–23 are disordered; it reads MGSVLSTDSGKSAPASATARALE. G2 carries N-myristoyl glycine lipidation. Residues C37 and C40 each coordinate Zn(2+). An RING-type zinc finger spans residues 37-76; sequence CAVCLEVLHQPVRTRCGHVFCRSCIATSLKNNKWTCPYCR. An interaction with the C2HC RNF-type zinc finger region spans residues 43–45; it reads VLH. Zn(2+) is bound by residues C52, H54, C57, C60, C72, C75, C100, and C103. The C2HC RNF-type zinc finger occupies 100–119; it reads CAECDTLVCLSEMRAHIRTC. The segment at 109–113 is interaction with the RING-type zinc finger; it reads LSEMR. Positions 115 and 119 each coordinate Zn(2+). Residues 120-128 are linker region; sequence QKYIDKYGP. The required for interaction with ubiquitin and for autoubiquitination stretch occupies residues 210-224; sequence EEALIRRVLDRSLLE.

In terms of assembly, interacts with UBE2D1. Interacts with VCP/p97; leading to recruit RNF125 to RIGI and promote ubiquitination of RIGI. Autoubiquitinated, leading to its subsequent proteasomal degradation. As to expression, predominantly expressed in lymphoid tissues, including bone marrow, spleen and thymus. Also weakly expressed in other tissues. Predominant in the CD4(+) and CD8(+) T-cells, suggesting that it is preferentially confined to T-cells.

The protein resides in the golgi apparatus membrane. The enzyme catalyses S-ubiquitinyl-[E2 ubiquitin-conjugating enzyme]-L-cysteine + [acceptor protein]-L-lysine = [E2 ubiquitin-conjugating enzyme]-L-cysteine + N(6)-ubiquitinyl-[acceptor protein]-L-lysine.. It functions in the pathway protein modification; protein ubiquitination. E3 ubiquitin-protein ligase that mediates ubiquitination and subsequent proteasomal degradation of target proteins, such as RIGI, MAVS/IPS1, IFIH1/MDA5, JAK1 and p53/TP53. Acts as a negative regulator of type I interferon production by mediating ubiquitination of RIGI at 'Lys-181', leading to RIGI degradation. Mediates ubiquitination and subsequent degradation of p53/TP53. Mediates ubiquitination and subsequent degradation of JAK1. Acts as a positive regulator of T-cell activation. The sequence is that of E3 ubiquitin-protein ligase RNF125 from Homo sapiens (Human).